A 339-amino-acid polypeptide reads, in one-letter code: DNA-directed RNA polymerase subunit alpha (339 aa).

Positions Met1 to Glu235 are alpha N-terminal domain (alpha-NTD). Positions Phe251 to Tyr339 are alpha C-terminal domain (alpha-CTD).

This sequence belongs to the RNA polymerase alpha chain family. As to quaternary structure, homodimer. The RNAP catalytic core consists of 2 alpha, 1 beta, 1 beta' and 1 omega subunit. When a sigma factor is associated with the core the holoenzyme is formed, which can initiate transcription.

It catalyses the reaction RNA(n) + a ribonucleoside 5'-triphosphate = RNA(n+1) + diphosphate. DNA-dependent RNA polymerase catalyzes the transcription of DNA into RNA using the four ribonucleoside triphosphates as substrates. The sequence is that of DNA-directed RNA polymerase subunit alpha from Rhodopseudomonas palustris (strain HaA2).